Reading from the N-terminus, the 340-residue chain is MEPSWLQELMAHPFLLLILLCMSLLLFQVIRLYQRRRWTIRAMHLFPAPPAHWFYGHKESYPVKEFEVYPELMEKYPCAVPLWVGPFTMFFNIHDPDYVKILLKRQDPKSAVSHKILESWVGRGLVTLDGSKWKKHRQIVKPGFNISILKIFITMMSKSVRMMLNKWEEHIAQNSRLELFQHVSLMTLDSIMKCAFSHQGSIQLDSTLDSYLKAVFNLSKISNQRMNNFLHHNDLVFKFSSQGQIFSKFNQELHQFTEKVIQDRKESLKDKLKQDTTQKRRQDFLDILLSAKSENTKDFSEADLQAEVKTFMFAGHDTTTTAISWIFYCLAKYPEHQQRC.

Topologically, residues 1–9 (MEPSWLQEL) are cytoplasmic. Residues 10–30 (MAHPFLLLILLCMSLLLFQVI) traverse the membrane as a helical; Signal-anchor for type II membrane protein segment. The Lumenal segment spans residues 31 to 340 (RLYQRRRWTI…AKYPEHQQRC (310 aa)).

Belongs to the cytochrome P450 family. Heme serves as cofactor. Detected at low levels in mammary gland and mammary carcinoma.

It localises to the membrane. The polypeptide is Putative inactive cytochrome P450 family member 4Z2 (CYP4Z2P) (Homo sapiens (Human)).